The sequence spans 379 residues: Putative acetyl-CoA C-acetyltransferase VraB (379 aa).

The Acyl-thioester intermediate role is filled by Cys-86. The Proton acceptor role is filled by His-338.

The protein belongs to the thiolase-like superfamily. Thiolase family.

The polypeptide is Putative acetyl-CoA C-acetyltransferase VraB (vraB) (Staphylococcus aureus (strain MRSA252)).